A 187-amino-acid chain; its full sequence is MATTNDIKNGTVLKLEGQLWNIIEFQHVKPGKGGAFVRTKMRNVMSGKVVDKTFNAGLKIETATVDRRDYQYLYQDGADFVFMDTQDYDQITVSGATVGDATNFMLENQMVNIAIHEGTPLYIELPPSVVLEITYTEPGLQGDRSSAGTKPATLETGYEIQVPLFVENNTKVKVDTRDGSYLGRVND.

Belongs to the elongation factor P family.

It localises to the cytoplasm. The protein operates within protein biosynthesis; polypeptide chain elongation. Its function is as follows. Involved in peptide bond synthesis. Stimulates efficient translation and peptide-bond synthesis on native or reconstituted 70S ribosomes in vitro. Probably functions indirectly by altering the affinity of the ribosome for aminoacyl-tRNA, thus increasing their reactivity as acceptors for peptidyl transferase. The polypeptide is Elongation factor P (Arthrobacter sp. (strain FB24)).